A 481-amino-acid polypeptide reads, in one-letter code: tRNA:m(4)X modification enzyme TRM13 homolog (481 aa).

Residues 56-83 (RILCPLDPKHTVYEDQLAKHLKKCNSRE) form a CHHC U11-48K-type zinc finger. 4 residues coordinate Zn(2+): C59, H65, H75, and C79. Residues 113-140 (SLSEEQLENLIKKLRKASEGLNSTHEDH) adopt a coiled-coil conformation. 2 disordered regions span residues 296–319 (AKRIKNDKTEKESNTLAKEGSEKD) and 379–414 (LEGSDVTPERKDAQRDENEEHDDGGDRLTDGNTDSL). Positions 385-407 (TPERKDAQRDENEEHDDGGDRLT) are enriched in basic and acidic residues.

Belongs to the methyltransferase TRM13 family.

It carries out the reaction cytidine(4) in tRNA(Pro) + S-adenosyl-L-methionine = 2'-O-methylcytidine(4) in tRNA(Pro) + S-adenosyl-L-homocysteine + H(+). The catalysed reaction is cytidine(4) in tRNA(Gly)(GCC) + S-adenosyl-L-methionine = 2'-O-methylcytidine(4) in tRNA(Gly)(GCC) + S-adenosyl-L-homocysteine + H(+). The enzyme catalyses adenosine(4) in tRNA(His) + S-adenosyl-L-methionine = 2'-O-methyladenosine(4) in tRNA(His) + S-adenosyl-L-homocysteine + H(+). Functionally, tRNA methylase which 2'-O-methylates cytidine(4) in tRNA(Pro) and tRNA(Gly)(GCC), and adenosine(4) in tRNA(His). The polypeptide is tRNA:m(4)X modification enzyme TRM13 homolog (Trmt13) (Mus musculus (Mouse)).